The primary structure comprises 618 residues: 1-deoxy-D-xylulose-5-phosphate synthase (618 aa).

Residues H76 and 117–119 each bind thiamine diphosphate; that span reads GHS. A Mg(2+)-binding site is contributed by D148. Thiamine diphosphate-binding positions include 149–150, N177, Y284, and E364; that span reads GA. Residue N177 participates in Mg(2+) binding.

This sequence belongs to the transketolase family. DXPS subfamily. In terms of assembly, homodimer. It depends on Mg(2+) as a cofactor. Thiamine diphosphate is required as a cofactor.

It catalyses the reaction D-glyceraldehyde 3-phosphate + pyruvate + H(+) = 1-deoxy-D-xylulose 5-phosphate + CO2. It functions in the pathway metabolic intermediate biosynthesis; 1-deoxy-D-xylulose 5-phosphate biosynthesis; 1-deoxy-D-xylulose 5-phosphate from D-glyceraldehyde 3-phosphate and pyruvate: step 1/1. In terms of biological role, catalyzes the acyloin condensation reaction between C atoms 2 and 3 of pyruvate and glyceraldehyde 3-phosphate to yield 1-deoxy-D-xylulose-5-phosphate (DXP). This is 1-deoxy-D-xylulose-5-phosphate synthase from Francisella philomiragia subsp. philomiragia (strain ATCC 25017 / CCUG 19701 / FSC 153 / O#319-036).